The sequence spans 232 residues: ATP phosphoribosyltransferase (232 aa).

This sequence belongs to the ATP phosphoribosyltransferase family. Short subfamily. Heteromultimer composed of HisG and HisZ subunits.

It is found in the cytoplasm. The catalysed reaction is 1-(5-phospho-beta-D-ribosyl)-ATP + diphosphate = 5-phospho-alpha-D-ribose 1-diphosphate + ATP. Its pathway is amino-acid biosynthesis; L-histidine biosynthesis; L-histidine from 5-phospho-alpha-D-ribose 1-diphosphate: step 1/9. Functionally, catalyzes the condensation of ATP and 5-phosphoribose 1-diphosphate to form N'-(5'-phosphoribosyl)-ATP (PR-ATP). Has a crucial role in the pathway because the rate of histidine biosynthesis seems to be controlled primarily by regulation of HisG enzymatic activity. The chain is ATP phosphoribosyltransferase (hisG) from Mesorhizobium japonicum (strain LMG 29417 / CECT 9101 / MAFF 303099) (Mesorhizobium loti (strain MAFF 303099)).